The primary structure comprises 98 residues: NADH-ubiquinone oxidoreductase chain 4L (98 aa).

3 helical membrane-spanning segments follow: residues 1-21, 26-46, and 61-81; these read MPLISTNILLAFITALLGVLI, LMSSLLCLEGMMLSMFILVSL, and LILLVFAACEAAVGLALLVMV.

The protein belongs to the complex I subunit 4L family. As to quaternary structure, core subunit of respiratory chain NADH dehydrogenase (Complex I) which is composed of 45 different subunits.

Its subcellular location is the mitochondrion inner membrane. It catalyses the reaction a ubiquinone + NADH + 5 H(+)(in) = a ubiquinol + NAD(+) + 4 H(+)(out). Functionally, core subunit of the mitochondrial membrane respiratory chain NADH dehydrogenase (Complex I) which catalyzes electron transfer from NADH through the respiratory chain, using ubiquinone as an electron acceptor. Part of the enzyme membrane arm which is embedded in the lipid bilayer and involved in proton translocation. In Nycticebus coucang (Slow loris), this protein is NADH-ubiquinone oxidoreductase chain 4L (MT-ND4L).